Here is a 394-residue protein sequence, read N- to C-terminus: Flavohemoprotein (394 aa).

In terms of domain architecture, Globin spans 1-138 (MLTQEHINII…LAQVFIDREG (138 aa)). Histidine 85 is a heme b binding site. Active-site charge relay system residues include tyrosine 95 and glutamate 137. A reductase region spans residues 149–394 (GGWRDGRTFV…VFGPHAQLAA (246 aa)). In terms of domain architecture, FAD-binding FR-type spans 152–262 (RDGRTFVVRE…YAPAGDFFYV (111 aa)). FAD is bound by residues tyrosine 190 and 206-209 (RQYS). 274–279 (GVGATP) contacts NADP(+). 385–388 (VFGP) is an FAD binding site.

Belongs to the globin family. Two-domain flavohemoproteins subfamily. It in the C-terminal section; belongs to the flavoprotein pyridine nucleotide cytochrome reductase family. It depends on heme b as a cofactor. The cofactor is FAD.

The catalysed reaction is 2 nitric oxide + NADPH + 2 O2 = 2 nitrate + NADP(+) + H(+). It carries out the reaction 2 nitric oxide + NADH + 2 O2 = 2 nitrate + NAD(+) + H(+). Functionally, is involved in NO detoxification in an aerobic process, termed nitric oxide dioxygenase (NOD) reaction that utilizes O(2) and NAD(P)H to convert NO to nitrate, which protects the bacterium from various noxious nitrogen compounds. Therefore, plays a central role in the inducible response to nitrosative stress. The protein is Flavohemoprotein (hmp) of Vibrio cholerae serotype O1 (strain ATCC 39315 / El Tor Inaba N16961).